The sequence spans 78 residues: MKEFLAYIIKNLVDRPEEVRIKEVQGTHTIIYELSVAKPDIGKIIGKEGRTIKAIRTLLVSVASRNNVRVSLEIMEEK.

A KH domain is found at 29–78 (TIIYELSVAKPDIGKIIGKEGRTIKAIRTLLVSVASRNNVRVSLEIMEEK).

The protein belongs to the KhpA RNA-binding protein family.

The protein localises to the cytoplasm. Its function is as follows. A probable RNA-binding protein. The polypeptide is RNA-binding protein KhpA (Chlamydia pneumoniae (Chlamydophila pneumoniae)).